The following is a 445-amino-acid chain: Xylose isomerase (445 aa).

Residues histidine 107 and aspartate 110 contribute to the active site. Mg(2+)-binding residues include glutamate 238, glutamate 274, histidine 277, aspartate 302, aspartate 313, aspartate 315, and aspartate 345.

The protein belongs to the xylose isomerase family. As to quaternary structure, homotetramer. The cofactor is Mg(2+).

It localises to the cytoplasm. It carries out the reaction alpha-D-xylose = alpha-D-xylulofuranose. The polypeptide is Xylose isomerase (xylA) (Bacillus spizizenii (strain ATCC 23059 / NRRL B-14472 / W23) (Bacillus subtilis subsp. spizizenii)).